The primary structure comprises 454 residues: Bifunctional protein GlmU (454 aa).

The segment at 1-225 (MNIVILAAGM…LWETLGVNSK (225 aa)) is pyrophosphorylase. Residues 6 to 9 (LAAG), Lys-20, Gln-71, 76 to 77 (GT), 98 to 100 (YGD), Gly-135, Glu-150, Asn-165, and Asn-223 each bind UDP-N-acetyl-alpha-D-glucosamine. Asp-100 provides a ligand contact to Mg(2+). Position 223 (Asn-223) interacts with Mg(2+). The tract at residues 226–246 (VQLAEIERIHQRNIAQRLLEA) is linker. The tract at residues 247–454 (GVTLLDPARI…WQRPVKQPKK (208 aa)) is N-acetyltransferase. UDP-N-acetyl-alpha-D-glucosamine is bound by residues Arg-329 and Lys-347. The active-site Proton acceptor is the His-359. UDP-N-acetyl-alpha-D-glucosamine is bound by residues Tyr-362 and Asn-373. Acetyl-CoA is bound by residues Ala-376, 382–383 (NY), Ser-401, Ala-419, and Arg-436.

The protein in the N-terminal section; belongs to the N-acetylglucosamine-1-phosphate uridyltransferase family. This sequence in the C-terminal section; belongs to the transferase hexapeptide repeat family. In terms of assembly, homotrimer. The cofactor is Mg(2+).

Its subcellular location is the cytoplasm. It carries out the reaction alpha-D-glucosamine 1-phosphate + acetyl-CoA = N-acetyl-alpha-D-glucosamine 1-phosphate + CoA + H(+). It catalyses the reaction N-acetyl-alpha-D-glucosamine 1-phosphate + UTP + H(+) = UDP-N-acetyl-alpha-D-glucosamine + diphosphate. It participates in nucleotide-sugar biosynthesis; UDP-N-acetyl-alpha-D-glucosamine biosynthesis; N-acetyl-alpha-D-glucosamine 1-phosphate from alpha-D-glucosamine 6-phosphate (route II): step 2/2. Its pathway is nucleotide-sugar biosynthesis; UDP-N-acetyl-alpha-D-glucosamine biosynthesis; UDP-N-acetyl-alpha-D-glucosamine from N-acetyl-alpha-D-glucosamine 1-phosphate: step 1/1. The protein operates within bacterial outer membrane biogenesis; LPS lipid A biosynthesis. Functionally, catalyzes the last two sequential reactions in the de novo biosynthetic pathway for UDP-N-acetylglucosamine (UDP-GlcNAc). The C-terminal domain catalyzes the transfer of acetyl group from acetyl coenzyme A to glucosamine-1-phosphate (GlcN-1-P) to produce N-acetylglucosamine-1-phosphate (GlcNAc-1-P), which is converted into UDP-GlcNAc by the transfer of uridine 5-monophosphate (from uridine 5-triphosphate), a reaction catalyzed by the N-terminal domain. This Cupriavidus metallidurans (strain ATCC 43123 / DSM 2839 / NBRC 102507 / CH34) (Ralstonia metallidurans) protein is Bifunctional protein GlmU.